A 291-amino-acid polypeptide reads, in one-letter code: Tryptophan synthase alpha chain (291 aa).

Catalysis depends on proton acceptor residues glutamate 69 and aspartate 80.

It belongs to the TrpA family. Tetramer of two alpha and two beta chains.

The catalysed reaction is (1S,2R)-1-C-(indol-3-yl)glycerol 3-phosphate + L-serine = D-glyceraldehyde 3-phosphate + L-tryptophan + H2O. It participates in amino-acid biosynthesis; L-tryptophan biosynthesis; L-tryptophan from chorismate: step 5/5. Functionally, the alpha subunit is responsible for the aldol cleavage of indoleglycerol phosphate to indole and glyceraldehyde 3-phosphate. The protein is Tryptophan synthase alpha chain of Bifidobacterium longum (strain NCC 2705).